The chain runs to 276 residues: Aldo-keto reductase Mjls_1919 (276 aa).

The Proton donor role is filled by Y50. NADPH-binding residues include L190, I228, K230, S231, V232, R236, S239, and N240.

Belongs to the aldo/keto reductase family.

This is Aldo-keto reductase Mjls_1919 from Mycobacterium sp. (strain JLS).